The primary structure comprises 469 residues: MAFPADLVGGLPTAAYQVEGGWDADGRGPCVWDTFTHQGGERVFKNQTGDVACGSYTLWEEDLKCIKQLGLTHYRFSISWSRLLPDGTTGFINQKGVDYYNKIIDDLLTNGVTPVVTLYHFDLPQALEDQGGWLSEAIIEVFDKYAQFCFSTFGNRVRQWITINEPNVLCAMGYDLGFFAPGVSQIGTGGYQAAHNMIKAHARAWHSYDSLFREKQKGMVSLSLFCIWPQPENPNSVLDQKAAERAINFQFDFFAKPIFIDGDYPELVKSQIASMSEKQGYPSSRLSKFTEEEKKMIKGTADFFAVQYYTTRFIRHKENKEAELGILQDAEIELFSDPSWKGVGWVRVVPWGIRKLLNYIKDTYNNPVIYITENGFPQDDPPSIDDTQRWECFRQTFEELFKAIHVDKVNLQLYCAWSLLDNFEWNDGYSKRFGLFHVDFEDPAKPRVPYTSAKEYAKIIRNNGLERPQ.

3 residues coordinate substrate: Gln17, His120, and Asn164. Glu165 (proton donor) is an active-site residue. Residue Tyr309 participates in substrate binding. Glu373 functions as the Nucleophile in the catalytic mechanism. Residues Trp417 and 424–425 (EW) each bind substrate.

This sequence belongs to the glycosyl hydrolase 1 family. Klotho subfamily. The N-terminus is blocked. As to expression, present in hepatocytes (at protein level).

The protein localises to the cytoplasm. It is found in the cytosol. The catalysed reaction is Hydrolysis of terminal, non-reducing beta-D-glucosyl residues with release of beta-D-glucose.. It catalyses the reaction a beta-D-glucosyl-(1&lt;-&gt;1')-N-acylsphing-4-enine + H2O = an N-acylsphing-4-enine + D-glucose. It carries out the reaction a beta-D-galactosyl-(1&lt;-&gt;1')-N-acylsphing-4-enine + H2O = an N-acylsphing-4-enine + D-galactose. The enzyme catalyses beta-D-glucosyl-(1&lt;-&gt;1)-sphing-4-enine + H2O = sphing-4-enine + D-glucose. The catalysed reaction is beta-D-glucosyl-(1&lt;-&gt;1)-N-octadecanoylsphing-4-enine + H2O = N-octadecanoylsphing-4-enine + D-glucose. It catalyses the reaction beta-D-galactosyl-(1&lt;-&gt;1)-sphing-4-enine + H2O = sphing-4-enine + D-galactose. It carries out the reaction beta-D-galactosyl-(1&lt;-&gt;1')-N-octadecanoylsphing-4-enine + H2O = N-octadecanoylsphing-4-enine + D-galactose. The enzyme catalyses a beta-D-xylosyl-(1&lt;-&gt;1')-N-acylsphing-4-enine + cholesterol = cholesteryl 3-beta-D-xyloside + an N-acylsphing-4-enine. With respect to regulation, inhibited by 2,4-dinitrophenyl-2-fluoro-2-deoxy-beta-D-glucopyranoside. Functionally, neutral cytosolic beta-glycosidase with a broad substrate specificity that could play a role in the catabolism of glycosylceramides. Has a significant glucosylceramidase activity in vitro. However, that activity is relatively low and its significance in vivo is not clear. Hydrolyzes galactosylceramide/GalCer, glucosylsphingosine/GlcSph and galactosylsphingosine/GalSph. However, the in vivo relevance of these activities is unclear. It can also hydrolyze a broad variety of dietary glycosides including phytoestrogens, flavonols, flavones, flavanones and cyanogens in vitro and could therefore play a role in the metabolism of xenobiotics. Possesses transxylosylase activity in vitro using xylosylated ceramides/XylCers (such as beta-D-xylosyl-(1&lt;-&gt;1')-N-acylsphing-4-enine) as xylosyl donors and cholesterol as acceptor. Could also play a role in the catabolism of cytosolic sialyl free N-glycans. This is Cytosolic beta-glucosidase from Cavia porcellus (Guinea pig).